The primary structure comprises 564 residues: MHSYDFALLLAFFVIVLLPAPWLGRFYYKVMEGQRTWLTPVLGPVEQGCYRLAGVNASQEQNWRQYTLALLAFNLVGFLLLFAVLLLQGYLPLNPQNLPGQEWSLAFNTAVSFVTNTNWQAYSGEASVSYLSQMLGLTVQNFVSPATGLAVLVVLCRGIARRSATTLGNFWVDMTRATLYGLLPLCLLLALLLVWQGVPQTFADYAHALTLQGADQTIPLGPAASQIAIKQLGTNGGGFFGVNSAHPFENPTAWSNLFEVASIILIPVALVFTFGHYVKDLRQSRAILACMLALFLIGGSTALWSEHQPNPALESTQVQQTAPLEGKESRFGTTGSVLWAVTTTAASNGSVNAMHDSLNPLTGMVAMVNMMVGEVIFGGVGAGLYGMLLFVLIAVFLAGLMIGRTPEYLGKKLQAREVQLLVATLLVMPVGVLVLGAIAASLPGPAGAVTNPGAHGFSQLLYAYTSGSANNGSAFAGFGANTVYHNLMIGLAMLIGRFGYILPILALAGSLAAKKSAPLGQNSFPTHGPLFTGLLLVTILLVGGLTFLPTLALGPIAEHLSLGF.

The next 10 helical transmembrane spans lie at Tyr-4–Gly-24, Thr-67–Leu-87, Leu-135–Leu-155, Leu-179–Pro-199, Phe-258–Val-278, Ala-286–Glu-306, Ala-382–Ile-402, Leu-420–Ala-440, Leu-487–Leu-507, and Gly-533–Leu-553.

This sequence belongs to the KdpA family. As to quaternary structure, the system is composed of three essential subunits: KdpA, KdpB and KdpC.

The protein localises to the cell inner membrane. Its function is as follows. Part of the high-affinity ATP-driven potassium transport (or Kdp) system, which catalyzes the hydrolysis of ATP coupled with the electrogenic transport of potassium into the cytoplasm. This subunit binds the periplasmic potassium ions and delivers the ions to the membrane domain of KdpB through an intramembrane tunnel. The sequence is that of Potassium-transporting ATPase potassium-binding subunit from Pseudomonas putida (strain ATCC 47054 / DSM 6125 / CFBP 8728 / NCIMB 11950 / KT2440).